The primary structure comprises 2764 residues: Teneurin-2 (2764 aa).

The Teneurin N-terminal domain occupies 1–375; sequence MDVKDRRHRS…KPSKYCSWKC (375 aa). Residues 1 to 379 are Cytoplasmic-facing; that stretch reads MDVKDRRHRS…YCSWKCAALS (379 aa). Ser-90 and Ser-124 each carry phosphoserine. Positions 111 to 271 are disordered; it reads TGSDADSDTE…HHHSSANSLN (161 aa). Positions 141–155 are enriched in polar residues; sequence SSGLSSRENSALTLT. Phosphothreonine is present on Thr-155. Ser-157 carries the phosphoserine modification. The span at 159 to 168 shows a compositional bias: basic and acidic residues; it reads NENKSDDDNG. The span at 174–188 shows a compositional bias: low complexity; the sequence is TSSSSLLPSAQLPSS. Polar residues predominate over residues 202–211; that stretch reads DSNTSHQIMD. Positions 229–240 are enriched in low complexity; it reads SGPQQASSSGPP. The chain crosses the membrane as a helical span at residues 380-400; the sequence is AIAAALLLAILLAYFIAMHLL. Topologically, residues 401–2764 are extracellular; it reads GLNWQLQPAD…FLRQNEMGKR (2364 aa). N-linked (GlcNAc...) asparagine glycans are attached at residues Asn-443 and Asn-482. EGF-like domains follow at residues 575 to 603, 598 to 634, 636 to 668, 669 to 701, 702 to 735, 737 to 765, 768 to 796, and 798 to 831; these read DCPR…ADCA, LGAD…AECD, PMNQ…EHCE, EVDC…NCEL, ARVQ…PDCS, VCSV…AACD, VCHP…EHCT, and DGCP…PGCN. Intrachain disulfides connect Cys-576/Cys-586, Cys-580/Cys-591, Cys-593/Cys-602, Cys-611/Cys-622, Cys-624/Cys-633, Cys-640/Cys-651, Cys-645/Cys-656, Cys-658/Cys-667, Cys-672/Cys-683, Cys-677/Cys-688, Cys-690/Cys-699, Cys-710/Cys-723, Cys-725/Cys-734, Cys-738/Cys-748, Cys-742/Cys-753, Cys-755/Cys-764, Cys-769/Cys-779, Cys-773/Cys-784, Cys-786/Cys-795, Cys-800/Cys-810, Cys-804/Cys-819, and Cys-821/Cys-830. N-linked (GlcNAc...) asparagine glycans are attached at residues Asn-915, Asn-938, and Asn-1257. 5 NHL repeats span residues 1262–1306, 1332–1376, 1391–1442, 1464–1491, and 1520–1563; these read LELR…VKSL, ARCG…NGII, LSCD…IAGR, LESA…INRL, and CYSG…VSKN. A YD 1 repeat occupies 1573–1592; sequence YEAASPGEQELYVFNADGIH. N-linked (GlcNAc...) asparagine glycosylation is present at Asn-1606. YD repeat units lie at residues 1609–1629, 1672–1691, and 1692–1714; these read YSAD…LKIR, YDGN…WTTF, and YDYD…TSLH. N-linked (GlcNAc...) asparagine glycans are attached at residues Asn-1702, Asn-1739, Asn-1763, Asn-1797, and Asn-1882. YD repeat units follow at residues 1885–1904, 1926–1944, 1945–1965, 1972–1989, 1990–2011, 2012–2029, 2032–2052, 2055–2075, 2083–2103, 2109–2126, 2127–2153, 2155–2168, 2169–2192, 2195–2215, 2216–2236, 2238–2258, 2270–2290, and 2292–2312; these read YFFN…ERTD, YLDK…YIFE, YDSS…HSMS, YIRN…VIFD, YSDD…VFYK, YGKL…TAVT, YDET…FSCT, YRKV…EGMI, YHDN…TPLP, YDEI…GVIY, YDIN…IKEV, YEMF…MTVQ, YDSM…TKYT, YDGD…WRYS, YDLN…LMPL, YDLR…DDDG, YNSK…SVQY, and YDGV…LQYF. The N-linked (GlcNAc...) asparagine glycan is linked to Asn-1983. Residue Asn-2187 is glycosylated (N-linked (GlcNAc...) asparagine). N-linked (GlcNAc...) asparagine glycosylation is present at Asn-2327. A YD 23 repeat occupies 2338–2379; that stretch reads YDLQGHLFAMESSSGEEYYVASDNTGTPLAVYSINGLMIKQL. The N-linked (GlcNAc...) asparagine glycan is linked to Asn-2638.

This sequence belongs to the tenascin family. Teneurin subfamily. In terms of assembly, homodimer; disulfide-linked. Heterodimer with either TENM1 or TENM3. May also form heterodimer with TENM4. Post-translationally, derives from the membrane form by proteolytic processing. In terms of processing, derives from the plasma membrane form by proteolytic cleavage and translocates to the nucleus. Homophilic binding of the C-terminal extracellular domain stimulates its proteolytic cleavage and release in the cytoplasmic. Is subjected to rapid degradation by the proteasome pathway. Expressed in the cortex, CA1, CA2, CA3, dentate gyrus and granular layer of the hippocampus. Expressed in the Purkinje cells and molecular layer of the cerebellum.

It localises to the cell membrane. It is found in the presynaptic cell membrane. The protein resides in the postsynaptic cell membrane. Its subcellular location is the endoplasmic reticulum. The protein localises to the golgi apparatus. It localises to the synapse. It is found in the cell projection. The protein resides in the dendritic spine. Its subcellular location is the filopodium. The protein localises to the growth cone. It localises to the nucleus. It is found in the PML body. Involved in neural development, regulating the establishment of proper connectivity within the nervous system. Acts as a ligand of the ADGRL1 and ADGRL3 receptors that are expressed at the surface of adjacent cells. Promotes the formation of filopodia and enlarged growth cone in neuronal cells. Mediates axon guidance and homophilic and heterophilic cell-cell adhesion. May function as a cellular signal transducer. In terms of biological role, induces gene transcription inhibition. The protein is Teneurin-2 (Tenm2) of Mus musculus (Mouse).